The sequence spans 501 residues: Aldehyde dehydrogenase 1A1 (501 aa).

S2 is modified (N-acetylserine). N6-acetyllysine is present on residues K91 and K128. NAD(+) is bound by residues 167–170 (IPWN), 193–196 (KPAE), 226–227 (GP), and 246–247 (GS). The residue at position 252 (K252) is an N6-acetyllysine. The Proton acceptor role is filled by E269. 269-271 (ELG) provides a ligand contact to NAD(+). C303 functions as the Nucleophile in the catalytic mechanism. Residues 336–501 (LTQGINQGPQ…VAMKISQKNS (166 aa)) are mediates interaction with PRMT3. Position 337 is a phosphothreonine (T337). An NAD(+)-binding site is contributed by 349–353 (EQHDK). An N6-acetyllysine mark is found at K353 and K367. 400-402 (EIF) lines the NAD(+) pocket. K410 carries the N6-acetyllysine modification. Position 413 is a phosphoserine (S413). N6-acetyllysine is present on residues K419, K435, and K495.

The protein belongs to the aldehyde dehydrogenase family. Homotetramer. Interacts with PRMT3; the interaction is direct, inhibits ALDH1A1 aldehyde dehydrogenase activity and is independent of the methyltransferase activity of PRMT3. In terms of processing, the N-terminus is blocked most probably by acetylation. As to expression, strongly expressed in kidney, lung, testis, intestine, stomach, and trachea, but weakly in the liver.

It is found in the cytoplasm. The protein localises to the cytosol. Its subcellular location is the cell projection. The protein resides in the axon. It carries out the reaction an aldehyde + NAD(+) + H2O = a carboxylate + NADH + 2 H(+). The enzyme catalyses all-trans-retinal + NAD(+) + H2O = all-trans-retinoate + NADH + 2 H(+). The catalysed reaction is 9-cis-retinal + NAD(+) + H2O = 9-cis-retinoate + NADH + 2 H(+). It catalyses the reaction 11-cis-retinal + NAD(+) + H2O = 11-cis-retinoate + NADH + 2 H(+). It carries out the reaction 13-cis-retinal + NAD(+) + H2O = 13-cis-retinoate + NADH + 2 H(+). The enzyme catalyses 3-deoxyglucosone + NAD(+) + H2O = 2-dehydro-3-deoxy-D-gluconate + NADH + 2 H(+). The catalysed reaction is (E)-4-hydroxynon-2-enal + NAD(+) + H2O = (E)-4-hydroxynon-2-enoate + NADH + 2 H(+). It catalyses the reaction malonaldehyde + NAD(+) + H2O = 3-oxopropanoate + NADH + 2 H(+). It carries out the reaction hexanal + NAD(+) + H2O = hexanoate + NADH + 2 H(+). The enzyme catalyses propanal + NAD(+) + H2O = propanoate + NADH + 2 H(+). The catalysed reaction is acetaldehyde + NAD(+) + H2O = acetate + NADH + 2 H(+). It catalyses the reaction benzaldehyde + NAD(+) + H2O = benzoate + NADH + 2 H(+). It carries out the reaction 4-aminobutanal + NAD(+) + H2O = 4-aminobutanoate + NADH + 2 H(+). It participates in cofactor metabolism; retinol metabolism. Its activity is regulated as follows. Inhibited by chloral hydrate. In terms of biological role, cytosolic dehydrogenase that catalyzes the irreversible oxidation of a wide range of aldehydes to their corresponding carboxylic acid. Functions downstream of retinol dehydrogenases and catalyzes the oxidation of retinaldehyde into retinoic acid, the second step in the oxidation of retinol/vitamin A into retinoic acid. This pathway is crucial to control the levels of retinol and retinoic acid, two important molecules which excess can be teratogenic and cytotoxic. Also oxidizes aldehydes resulting from lipid peroxidation like (E)-4-hydroxynon-2-enal/HNE, malonaldehyde and hexanal that form protein adducts and are highly cytotoxic. By participating for instance to the clearance of (E)-4-hydroxynon-2-enal/HNE in the lens epithelium prevents the formation of HNE-protein adducts and lens opacification. Functions also downstream of fructosamine-3-kinase in the fructosamine degradation pathway by catalyzing the oxidation of 3-deoxyglucosone, the carbohydrate product of fructosamine 3-phosphate decomposition, which is itself a potent glycating agent that may react with lysine and arginine side-chains of proteins. Also has an aminobutyraldehyde dehydrogenase activity and is probably part of an alternative pathway for the biosynthesis of GABA/4-aminobutanoate in midbrain, thereby playing a role in GABAergic synaptic transmission. The chain is Aldehyde dehydrogenase 1A1 from Rattus norvegicus (Rat).